The sequence spans 122 residues: Toxin CSTX-1 (122 aa).

A signal peptide spans 1–20 (MKVLIISAVLFITIFSNISA). The propeptide occupies 21-47 (EIEDDFLEDESFEAEDIIPFFENEQAR). Disulfide bonds link cysteine 49-cysteine 64, cysteine 56-cysteine 73, cysteine 63-cysteine 91, and cysteine 75-cysteine 89. Residues 99-112 (AIETGLNIFRGLFK) are predicted alpha-helix. Arginine 108 carries the arginine amide; in CSTX-2a modification. Lysine 121 carries the lysine amide; in omega-ctenitoxin-Cs1a modification.

The protein belongs to the neurotoxin 19 (CSTX) family. 04 (U1-Lctx) subfamily. In terms of assembly, monomer. Interacts with CSTX-13 (AC P83919) (Kd=430 nM), but does not interact with CSTX-9 (AC P58604). Expressed by the venom gland.

It is found in the secreted. It localises to the target cell membrane. Functionally, spider venom toxin that shows calcium channel blocking activity and exhibits cytolytic activity by affecting the outer leaflet curvature and/or pore formation across the membrane. It blocks L-type calcium channels (Cav1/CACNA1) in mammalian neurons at nanomolar concentrations. Furthermore, it produces a slow voltage-independent block of mid/low and high voltage-activated calcium channels in cockroach neurons. Potassium ions, histamine, M-ctenitoxin-Cs1a (AC P83619), CSTX-9 (AC P58604), and CSTX-13 (AC P83919) synergistically increase the insecticidal activity of this toxin. In vivo, it causes paralysis in blow flies and provokes death in drosophila. Its function is as follows. Blocks voltage-activated calcium channels (Cav). Does not induce cell membrane permeability increase when tested on Xenopus oocytes. No alpha-helical structures are detectable. Is 7-fold less neurotoxic than omega-ctenitoxin-Cs1a on drosophila flies. Blocks voltage-activated calcium channels (Cav). Is 190-fold less neurotoxic than omega-ctenitoxin-Cs1a on drosophila flies. The chain is Toxin CSTX-1 from Cupiennius salei (American wandering spider).